The primary structure comprises 227 residues: Aspartyl protease inhibitor (227 aa).

Positions 1–15 are cleaved as a signal peptide; sequence MKLVVLCVLCGIALA. Over residues 88–109 the composition is skewed to basic and acidic residues; sequence SLKSRMAGKKEKAVTPKEEDLP. The disordered stretch occupies residues 88–116; it reads SLKSRMAGKKEKAVTPKEEDLPKAPQKPS. A disulfide bridge links Cys-131 with Cys-223.

This sequence belongs to the protease inhibitor I33 family.

Its subcellular location is the secreted. Its function is as follows. Aspartyl protease inhibitor. In Ostertagia ostertagi (Brown stomach worm), this protein is Aspartyl protease inhibitor (API).